Reading from the N-terminus, the 458-residue chain is SLIT-ROBO Rho GTPase-activating protein 2B (458 aa).

In terms of domain architecture, F-BAR spans 22 to 324 (KEIRAQLTEQ…AVENLDATSD (303 aa)). Basic and acidic residues predominate over residues 181-203 (LKEAEKQEEKQIGKSVKQEDRQT). Residues 181-214 (LKEAEKQEEKQIGKSVKQEDRQTPRSPDSTANVR) form a disordered region. Residues 362-400 (QSELLQRCQQLQSRLSTLKIENEEVKKTMEATLQTIQDI) are a coiled coil.

As to quaternary structure, may interact with SRGAP2; formation of the heterodimer alters SRGAP2 function.

In terms of biological role, may regulate cell migration and differentiation through interaction with and inhibition of SRGAP2. In contrast to SRGAP2C, it is not able to induce long-lasting changes in synaptic density throughout adulthood. This chain is SLIT-ROBO Rho GTPase-activating protein 2B (SRGAP2B), found in Homo sapiens (Human).